The chain runs to 303 residues: Phospholipase A1 2 (303 aa).

A disulfide bond links Cys-6 and Cys-90. Ser-140 acts as the Nucleophile in catalysis. Asp-168 serves as the catalytic Charge relay system. A disulfide bond links Cys-179 and Cys-184. Residue His-232 is the Charge relay system of the active site. 3 cysteine pairs are disulfide-bonded: Cys-247–Cys-271, Cys-248–Cys-296, and Cys-264–Cys-269.

Belongs to the AB hydrolase superfamily. Lipase family. Expressed by the venom gland.

It is found in the secreted. It carries out the reaction a 1,2-diacyl-sn-glycero-3-phosphocholine + H2O = a 2-acyl-sn-glycero-3-phosphocholine + a fatty acid + H(+). In terms of biological role, catalyzes the hydrolysis of phosphatidylcholine with phospholipase A1 activity. May act as an allergen and induce hemolytic activity. This chain is Phospholipase A1 2, found in Dolichovespula maculata (Bald-faced hornet).